The sequence spans 990 residues: Importin beta-like protein kap111 (990 aa).

Belongs to the importin beta family.

The protein resides in the nucleus. Its function is as follows. Functions as a component of the nuclear pore complex (NPC). NPC components, collectively referred to as nucleoporins (NUPs), can play the role of both NPC structural components and of docking or interaction partners for transiently associated nuclear transport factors. Active directional transport is assured by both, a Phe-Gly (FG) repeat affinity gradient for these transport factors across the NPC and a transport cofactor concentration gradient across the nuclear envelope. In Schizosaccharomyces pombe (strain 972 / ATCC 24843) (Fission yeast), this protein is Importin beta-like protein kap111 (kap111).